Here is a 153-residue protein sequence, read N- to C-terminus: IAA acetyltransferase (153 aa).

An N-acetyltransferase domain is found at Val-4–Leu-153.

Its function is as follows. Participates in the tryptophan-dependent indole-3-acetic acid production, which is a phytohormone released by A.brasilense. This chain is IAA acetyltransferase, found in Azospirillum brasilense.